The following is a 1269-amino-acid chain: Protein cramped-like (1269 aa).

Residues 1-12 (MTVKLGDGGSGE) are compositionally biased toward gly residues. The tract at residues 1–165 (MTVKLGDGGS…GKKVRRQWES (165 aa)) is disordered. Composition is skewed to basic and acidic residues over residues 13 to 24 (DGLKKLGKRAAD) and 43 to 52 (SGTKRDEKTP). Over residues 59–74 (PPAPPGAPQAPSPPQG) the composition is skewed to pro residues. Positions 105 to 123 (GNAGGSGPRGKGAEGGGSS) are enriched in gly residues. Residues 124 to 147 (SGNVSGVAPAAPAGGSRSSSRNLG) show a composition bias toward low complexity. Positions 151–165 (GEKEEGKKVRRQWES) are enriched in basic and acidic residues. The SANT domain occupies 161-224 (RQWESWSTED…FYYRTWHKIT (64 aa)). S307 is subject to Phosphoserine. Disordered stretches follow at residues 450-541 (IQSG…PGAL), 581-666 (DTRP…EVPA), 757-827 (VRPA…NDSD), 976-1034 (EGLS…DSFQ), 1055-1092 (IPLS…SQGE), and 1115-1157 (VPLS…PSDS). Residues 485–507 (SSGESSPESAPGEGAALSLSSPD) show a composition bias toward low complexity. Composition is skewed to basic and acidic residues over residues 508–518 (APDRPPPRHQD) and 526–535 (TPAEGRDSPT). 3 stretches are compositionally biased toward polar residues: residues 757–767 (VRPAQEEQSMT), 774–806 (TVSS…SSGL), and 982–1002 (SPLS…TGTH). 2 stretches are compositionally biased toward low complexity: residues 1055 to 1070 (IPLS…LSPP) and 1125 to 1140 (SDSS…SPQP). S1268 is modified (phosphoserine).

The protein belongs to the cramped family.

It is found in the nucleus. The chain is Protein cramped-like from Homo sapiens (Human).